We begin with the raw amino-acid sequence, 277 residues long: Phosphatidylserine decarboxylase proenzyme (277 aa).

Catalysis depends on charge relay system; for autoendoproteolytic cleavage activity residues D88, H144, and S242. The active-site Schiff-base intermediate with substrate; via pyruvic acid; for decarboxylase activity is S242. S242 carries the pyruvic acid (Ser); by autocatalysis modification.

The protein belongs to the phosphatidylserine decarboxylase family. PSD-B subfamily. Prokaryotic type I sub-subfamily. In terms of assembly, heterodimer of a large membrane-associated beta subunit and a small pyruvoyl-containing alpha subunit. Pyruvate serves as cofactor. Is synthesized initially as an inactive proenzyme. Formation of the active enzyme involves a self-maturation process in which the active site pyruvoyl group is generated from an internal serine residue via an autocatalytic post-translational modification. Two non-identical subunits are generated from the proenzyme in this reaction, and the pyruvate is formed at the N-terminus of the alpha chain, which is derived from the carboxyl end of the proenzyme. The autoendoproteolytic cleavage occurs by a canonical serine protease mechanism, in which the side chain hydroxyl group of the serine supplies its oxygen atom to form the C-terminus of the beta chain, while the remainder of the serine residue undergoes an oxidative deamination to produce ammonia and the pyruvoyl prosthetic group on the alpha chain. During this reaction, the Ser that is part of the protease active site of the proenzyme becomes the pyruvoyl prosthetic group, which constitutes an essential element of the active site of the mature decarboxylase.

It is found in the cell membrane. The enzyme catalyses a 1,2-diacyl-sn-glycero-3-phospho-L-serine + H(+) = a 1,2-diacyl-sn-glycero-3-phosphoethanolamine + CO2. It functions in the pathway phospholipid metabolism; phosphatidylethanolamine biosynthesis; phosphatidylethanolamine from CDP-diacylglycerol: step 2/2. In terms of biological role, catalyzes the formation of phosphatidylethanolamine (PtdEtn) from phosphatidylserine (PtdSer). This chain is Phosphatidylserine decarboxylase proenzyme, found in Psychrobacter arcticus (strain DSM 17307 / VKM B-2377 / 273-4).